Consider the following 301-residue polypeptide: GTPase Era (301 aa).

An Era-type G domain is found at 7–175; it reads YCGFIAIVGR…AGIVRKHLPE (169 aa). The G1 stretch occupies residues 15–22; sequence GRPNVGKS. A GTP-binding site is contributed by 15 to 22; that stretch reads GRPNVGKS. The segment at 41–45 is G2; that stretch reads QTTRH. The tract at residues 62–65 is G3; it reads DTPG. Residues 62–66 and 124–127 each bind GTP; these read DTPGL and NKVD. The tract at residues 124–127 is G4; the sequence is NKVD. The interval 154 to 156 is G5; sequence ISA. A KH type-2 domain is found at 206–283; that stretch reads LGAELPYSVT…HLELWVKVKS (78 aa).

It belongs to the TRAFAC class TrmE-Era-EngA-EngB-Septin-like GTPase superfamily. Era GTPase family. As to quaternary structure, monomer.

The protein localises to the cytoplasm. It localises to the cell inner membrane. An essential GTPase that binds both GDP and GTP, with rapid nucleotide exchange. Plays a role in 16S rRNA processing and 30S ribosomal subunit biogenesis and possibly also in cell cycle regulation and energy metabolism. This Salmonella agona (strain SL483) protein is GTPase Era.